The primary structure comprises 1706 residues: 5'-3' exoribonuclease 1 (1706 aa).

Position 1348 is a phosphoserine (S1348). A disordered region spans residues 1619-1706; sequence ENKEAQSSQA…VNFGVSKPSE (88 aa). Positions 1623-1642 are enriched in polar residues; the sequence is AQSSQATPVQTSQPDSSNIV. Position 1645 is a phosphoserine (S1645). The segment covering 1647–1657 has biased composition (low complexity); that stretch reads RESSSASLKSS. The segment covering 1658-1676 has biased composition (polar residues); that stretch reads PIAQPASSFQVETASQGHS. The span at 1677 to 1694 shows a compositional bias: basic residues; sequence ISHHKSTPISSSRRKSRK.

It belongs to the 5'-3' exonuclease family. As to quaternary structure, found in a mRNP complex with UPF1, UPF2, UPF3B and XRN1. Associates with alpha and beta tubulins. Interacts with DIS3L2. Interacts with ZC3HAV1 in an RNA-dependent manner. Interacts with ZFP36L1. Interacts with TRIM71 (via NHL repeats) in an RNA-dependent manner. Interacts with YTHDC2 (via ANK repeats). Interacts with DHX34; the interaction is RNA-independent. In terms of tissue distribution, expressed in heart, brain, pancreas, spleen, testis, osteogenic sarcoma (OGS) biopsy and primary cell lines.

It localises to the cytoplasm. Major 5'-3' exoribonuclease involved in mRNA decay. Required for the 5'-3'-processing of the G4 tetraplex-containing DNA and RNA substrates. The kinetic of hydrolysis is faster for G4 RNA tetraplex than for G4 DNA tetraplex and monomeric RNA tetraplex. Binds to RNA and DNA. Plays a role in replication-dependent histone mRNA degradation. May act as a tumor suppressor protein in osteogenic sarcoma (OGS). This chain is 5'-3' exoribonuclease 1, found in Homo sapiens (Human).